The sequence spans 430 residues: MKVALPKGVFDIFPYITDAKHMWRHTSLWHRVEDVIHDVCGLYGFSEIRTPVFEKSEVFLHVGEQSDIVKKEMYTFLDKKGRSLTLRPEGTAPIVRSFIDNSMNQRDDNKFYYILPMFRYERQQSGRYRQHHQFGVEAIGVRHPLRDAEILALLWHFYSAVGLQHMQVQLNFLGGEVTRKRYDKILREYFLDHLSSLSLLSKERFNTNLLRILDSKEPEDQEIIQSAPPILDYVSDDDRKYFDEILSALDALNIAYDINPRLVRGLDYYTDLVFEAITTCRDHSYALGGGGRYDGLIASSGGPATPACGFGIGLERVIQTLLAQGNFTPLSSHKLRLIPVESQADSFCFVWAQHLRSLGIPTEVDWTHKKLKNALKIADAEKATFVCPVGERELVSEQLTVKNMSLRQEFSGSKQEVEQRLLYEIQNTSL.

The protein belongs to the class-II aminoacyl-tRNA synthetase family. In terms of assembly, homodimer.

The protein localises to the cytoplasm. The catalysed reaction is tRNA(His) + L-histidine + ATP = L-histidyl-tRNA(His) + AMP + diphosphate + H(+). This is Histidine--tRNA ligase from Chlamydia abortus (strain DSM 27085 / S26/3) (Chlamydophila abortus).